A 483-amino-acid chain; its full sequence is tRNA sulfurtransferase (483 aa).

Positions Gly-63 to Lys-167 constitute a THUMP domain. Residues Leu-185–Ile-186, Lys-267, Gly-289, and Gln-298 each bind ATP. A disulfide bond links Cys-346 and Cys-457. The Rhodanese domain maps to Leu-405 to Pro-483. Cys-457 (cysteine persulfide intermediate) is an active-site residue.

This sequence belongs to the ThiI family.

The protein resides in the cytoplasm. It carries out the reaction [ThiI sulfur-carrier protein]-S-sulfanyl-L-cysteine + a uridine in tRNA + 2 reduced [2Fe-2S]-[ferredoxin] + ATP + H(+) = [ThiI sulfur-carrier protein]-L-cysteine + a 4-thiouridine in tRNA + 2 oxidized [2Fe-2S]-[ferredoxin] + AMP + diphosphate. The enzyme catalyses [ThiS sulfur-carrier protein]-C-terminal Gly-Gly-AMP + S-sulfanyl-L-cysteinyl-[cysteine desulfurase] + AH2 = [ThiS sulfur-carrier protein]-C-terminal-Gly-aminoethanethioate + L-cysteinyl-[cysteine desulfurase] + A + AMP + 2 H(+). It functions in the pathway cofactor biosynthesis; thiamine diphosphate biosynthesis. In terms of biological role, catalyzes the ATP-dependent transfer of a sulfur to tRNA to produce 4-thiouridine in position 8 of tRNAs, which functions as a near-UV photosensor. Also catalyzes the transfer of sulfur to the sulfur carrier protein ThiS, forming ThiS-thiocarboxylate. This is a step in the synthesis of thiazole, in the thiamine biosynthesis pathway. The sulfur is donated as persulfide by IscS. This is tRNA sulfurtransferase from Saccharophagus degradans (strain 2-40 / ATCC 43961 / DSM 17024).